A 371-amino-acid polypeptide reads, in one-letter code: RT1 class I histocompatibility antigen, AA alpha chain (371 aa).

Residues 1–24 (MEAMAPRTLLLLLAAALAPTQTRA) form the signal peptide. The interval 25 to 114 (GSHSLRYFYT…LRGYYNQSEG (90 aa)) is alpha-1. Over 25-311 (GSHSLRYFYT…PSTDSNMETT (287 aa)) the chain is Extracellular. N-linked (GlcNAc...) asparagine glycosylation is present at Asn110. The alpha-2 stretch occupies residues 115–206 (GSHTIQEMYG…ELGKETLLRS (92 aa)). The interval 207-298 (DPPEAHVTLH…GLPKPLSQRW (92 aa)) is alpha-3. The 87-residue stretch at 209–295 (PEAHVTLHPR…EHEGLPKPLS (87 aa)) folds into the Ig-like C1-type domain. Asn280 carries an N-linked (GlcNAc...) asparagine glycan. The interval 299 to 311 (EPSPSTDSNMETT) is connecting peptide. A helical membrane pass occupies residues 312-336 (VIYVILGAVAMIGAVAIIGAMVAVV). Over 337–371 (RRRKRNTGGKGGDYAPAPGRDSSQSSDVSLPDCKA) the chain is Cytoplasmic. The tract at residues 342 to 371 (NTGGKGGDYAPAPGRDSSQSSDVSLPDCKA) is disordered. 2 positions are modified to phosphoserine: Ser362 and Ser365.

This sequence belongs to the MHC class I family. Heterodimer of an alpha chain and a beta chain (beta-2-microglobulin).

It localises to the membrane. In terms of biological role, involved in the presentation of foreign antigens to the immune system. This Rattus norvegicus (Rat) protein is RT1 class I histocompatibility antigen, AA alpha chain.